The chain runs to 101 residues: MSRKSVIQRNLKRISICSRLKSKRDELKAIIKDQSISMNDRFLAQVKLSKLPRDSSYIRIRNRCLVTGRPRGCYRKFKVSRIVLRQLGSIGQIPGLTKSSW.

Belongs to the universal ribosomal protein uS14 family. As to quaternary structure, part of the 30S ribosomal subunit. Contacts proteins S3 and S10.

Binds 16S rRNA, required for the assembly of 30S particles and may also be responsible for determining the conformation of the 16S rRNA at the A site. This chain is Small ribosomal subunit protein uS14, found in Ehrlichia canis (strain Jake).